Consider the following 115-residue polypeptide: MKILVALAVLALVSTQLFAEDIRANDDLNYWSDWSDSDQIKEELPEPFEHLLQRIARRPKPQQFFGLMGKRDAGHGQISHKRHKTDSFVGLMGKRALNSVAYERSAMQNYERRRK.

An N-terminal signal peptide occupies residues 1–19 (MKILVALAVLALVSTQLFA). The propeptide occupies 20 to 56 (EDIRANDDLNYWSDWSDSDQIKEELPEPFEHLLQRIA). Methionine 68 and methionine 92 each carry methionine amide.

Belongs to the tachykinin family. The substance P form is cleaved at Pro-59 by the prolyl endopeptidase FAP (seprase) activity (in vitro). Substance P is also cleaved and degraded by Angiotensin-converting enzyme (ACE) and neprilysin (MME).

The protein localises to the secreted. Functionally, tachykinins are active peptides which excite neurons, evoke behavioral responses, are potent vasodilators and secretagogues, and contract (directly or indirectly) many smooth muscles. The polypeptide is Protachykinin-1 (TAC1) (Oryctolagus cuniculus (Rabbit)).